The primary structure comprises 198 residues: SOSS complex subunit B2 (198 aa).

The segment at residues 26–89 is a DNA-binding region (OB); the sequence is IVLEIGRVTK…SMWKGCLTLY (64 aa). The tract at residues 114–198 is disordered; the sequence is EPNPDYRGQQ…ARDPRRAFKR (85 aa). Composition is skewed to polar residues over residues 136–151 and 173–188; these read STNT…QTGP and LPGT…TISN.

This sequence belongs to the SOSS-B family. SOSS-B2 subfamily. As to quaternary structure, component of the SOSS complex, composed of SOSS-B (SOSS-B1/NABP2 or SOSS-B2/NABP1), SOSS-A/INTS3 and SOSS-C/INIP. SOSS complexes containing SOSS-B1/NABP2 are more abundant than complexes containing SOSS-B2/NABP1. As to expression, ubiquitous with high expression in the thymus.

Its subcellular location is the nucleus. Its function is as follows. Component of the SOSS complex, a multiprotein complex that functions downstream of the MRN complex to promote DNA repair and G2/M checkpoint. In the SOSS complex, acts as a sensor of single-stranded DNA that binds to single-stranded DNA, in particular to polypyrimidines. The SOSS complex associates with DNA lesions and influences diverse endpoints in the cellular DNA damage response including cell-cycle checkpoint activation, recombinational repair and maintenance of genomic stability. Required for efficient homologous recombination-dependent repair of double-strand breaks (DSBs) and ATM-dependent signaling pathways. This Mus musculus (Mouse) protein is SOSS complex subunit B2 (Nabp1).